The following is a 186-amino-acid chain: dCTP deaminase (186 aa).

107–112 (KSSYAR) lines the dCTP pocket. The Proton donor/acceptor role is filled by E133. DCTP-binding residues include Q152, Y166, and Q176.

The protein belongs to the dCTP deaminase family. Homotrimer.

The catalysed reaction is dCTP + H2O + H(+) = dUTP + NH4(+). Its pathway is pyrimidine metabolism; dUMP biosynthesis; dUMP from dCTP (dUTP route): step 1/2. Its function is as follows. Catalyzes the deamination of dCTP to dUTP. This chain is dCTP deaminase, found in Chloroflexus aurantiacus (strain ATCC 29366 / DSM 635 / J-10-fl).